A 246-amino-acid chain; its full sequence is Bis(5'-nucleosyl)-tetraphosphatase PrpE [asymmetrical] (246 aa).

The protein belongs to the PrpE family. Requires Ni(2+) as cofactor.

It catalyses the reaction P(1),P(4)-bis(5'-guanosyl) tetraphosphate + H2O = GMP + GTP + 2 H(+). Functionally, asymmetrically hydrolyzes Ap4p to yield AMP and ATP. This Bacillus cereus (strain ZK / E33L) protein is Bis(5'-nucleosyl)-tetraphosphatase PrpE [asymmetrical].